Reading from the N-terminus, the 870-residue chain is Aldehyde-alcohol dehydrogenase 2 (870 aa).

Cys252 is a catalytic residue. 431–436 (GCGSYG) serves as a coordination point for NAD(+).

In the N-terminal section; belongs to the aldehyde dehydrogenase family. The protein in the C-terminal section; belongs to the iron-containing alcohol dehydrogenase family. Seems to form a rod shaped homomer composed of at least 20 identical subunits. Zn(2+) is required as a cofactor. Requires Fe(2+) as cofactor.

The enzyme catalyses a primary alcohol + NAD(+) = an aldehyde + NADH + H(+). It catalyses the reaction a secondary alcohol + NAD(+) = a ketone + NADH + H(+). It carries out the reaction acetaldehyde + NAD(+) + CoA = acetyl-CoA + NADH + H(+). In terms of biological role, this enzyme has two NAD(+)-dependent activities: ADH and ACDH. May be a critical enzyme in the fermentative pathway. This Entamoeba histolytica (strain ATCC 30459 / HM-1:IMSS / ABRM) protein is Aldehyde-alcohol dehydrogenase 2 (ADH2).